The primary structure comprises 364 residues: Anhydro-N-acetylmuramic acid kinase (364 aa).

Position 12–19 (12–19 (GTSHDAID)) interacts with ATP.

The protein belongs to the anhydro-N-acetylmuramic acid kinase family.

It catalyses the reaction 1,6-anhydro-N-acetyl-beta-muramate + ATP + H2O = N-acetyl-D-muramate 6-phosphate + ADP + H(+). The protein operates within amino-sugar metabolism; 1,6-anhydro-N-acetylmuramate degradation. It participates in cell wall biogenesis; peptidoglycan recycling. Catalyzes the specific phosphorylation of 1,6-anhydro-N-acetylmuramic acid (anhMurNAc) with the simultaneous cleavage of the 1,6-anhydro ring, generating MurNAc-6-P. Is required for the utilization of anhMurNAc either imported from the medium or derived from its own cell wall murein, and thus plays a role in cell wall recycling. This is Anhydro-N-acetylmuramic acid kinase from Gamma-proteobacterium EBAC31A08.